Reading from the N-terminus, the 218-residue chain is Cold-regulated protein 28 (218 aa).

Disordered regions lie at residues 1-51 and 166-218; these read MEND…ADSK and TKHS…KPRT. Over residues 20–37 the composition is skewed to low complexity; that stretch reads EASAESQSESTLSNSLDS. The segment covering 186–207 has biased composition (basic and acidic residues); that stretch reads GEVSKKREREANNDDSSLKEDQ.

It localises to the nucleus. Its function is as follows. Together with COR27, involved in central circadian clock regulation and in flowering promotion, by binding to the chromatin of clock-associated evening genes TOC1, PRR5, ELF4 and cold-responsive genes in order to repress their transcription. Negative regulator of freezing tolerance. This chain is Cold-regulated protein 28, found in Arabidopsis thaliana (Mouse-ear cress).